We begin with the raw amino-acid sequence, 388 residues long: Alanine racemase, catabolic (388 aa).

Residue Lys46 is the Proton acceptor; specific for D-alanine of the active site. N6-(pyridoxal phosphate)lysine is present on Lys46. Arg145 serves as a coordination point for substrate. Tyr267 acts as the Proton acceptor; specific for L-alanine in catalysis. Met315 serves as a coordination point for substrate.

This sequence belongs to the alanine racemase family. Requires pyridoxal 5'-phosphate as cofactor.

The enzyme catalyses L-alanine = D-alanine. Isomerizes L-alanine to D-alanine which is then oxidized to pyruvate by DadA. The sequence is that of Alanine racemase, catabolic (dadB) from Agrobacterium fabrum (strain C58 / ATCC 33970) (Agrobacterium tumefaciens (strain C58)).